We begin with the raw amino-acid sequence, 166 residues long: UPF0260 protein GbCGDNIH1_2046 (166 aa).

Residues 147-166 (RFPRPRRPRQEPAGKTADES) are disordered. Over residues 154 to 166 (PRQEPAGKTADES) the composition is skewed to basic and acidic residues.

It belongs to the UPF0260 family.

This chain is UPF0260 protein GbCGDNIH1_2046, found in Granulibacter bethesdensis (strain ATCC BAA-1260 / CGDNIH1).